A 90-amino-acid polypeptide reads, in one-letter code: Putative toxin RelE1 (90 aa).

This sequence belongs to the RelE toxin family.

Toxic component of a type II toxin-antitoxin (TA) system. Its cognate antitoxin is RelB1 (Potential). The sequence is that of Putative toxin RelE1 (relE1) from Methanocaldococcus jannaschii (strain ATCC 43067 / DSM 2661 / JAL-1 / JCM 10045 / NBRC 100440) (Methanococcus jannaschii).